Consider the following 766-residue polypeptide: Subtilisin-like protease SBT4.15 (766 aa).

The first 23 residues, 1–23, serve as a signal peptide directing secretion; the sequence is MVSNQRVRLFMLCFCLVNNAVIA. The propeptide at 24 to 113 is activation peptide; sequence ATEDENVERK…VFKNTQRQLH (90 aa). An Inhibitor I9 domain is found at 35 to 113; the sequence is YIVYMGEATE…VFKNTQRQLH (79 aa). Residues 117-601 form the Peptidase S8 domain; the sequence is SWDFLGLVES…SGQINPRRAI (485 aa). Catalysis depends on Asp144, which acts as the Charge relay system. The N-linked (GlcNAc...) asparagine glycan is linked to Asn175. His210 serves as the catalytic Charge relay system. 3 N-linked (GlcNAc...) asparagine glycosylation sites follow: Asn233, Asn376, and Asn465. Positions 365 to 460 constitute a PA domain; sequence MYPLTSGSLA…YVFFEDGTKI (96 aa). Ser543 serves as the catalytic Charge relay system. Residues Asn624, Asn638, and Asn668 are each glycosylated (N-linked (GlcNAc...) asparagine).

It belongs to the peptidase S8 family. Post-translationally, the C-terminal propeptide is autocleaved.

The protein resides in the secreted. The polypeptide is Subtilisin-like protease SBT4.15 (Arabidopsis thaliana (Mouse-ear cress)).